The primary structure comprises 735 residues: Probable E3 ubiquitin-protein ligase MID2 (735 aa).

The RING-type zinc-finger motif lies at 30 to 80 (CPICLELFEDPLLLPCAHSLCFSCAHRILVSSCSSGESIEPITAFQCPTCR). Residues 137 to 184 (IACQFCEQDPPRDAVKTCITCEVSYCDRCLRATHPNKKPFTSHRLVEP) form a B box-type 1; degenerate zinc finger. The segment at 190-232 (LRGITCLDHENEKVNMYCVSDDQLICALCKLVGRHRDHQVASL) adopts a B box-type 2 zinc-finger fold. 4 residues coordinate Zn(2+): Cys-195, His-198, Cys-218, and His-224. The stretch at 233–301 (NDRFEKLKQT…IIQQRKQMIA (69 aa)) forms a coiled coil. In terms of domain architecture, COS spans 340–399 (LKENDQARFLQSAKNIAERVAMATASSQVLIPDINFNDAFENFALDFSREKKLLEGLDYL). One can recognise a Fibronectin type-III domain in the interval 398–531 (YLTAPNPPSI…RNSEPTRLKT (134 aa)). One can recognise a B30.2/SPRY domain in the interval 516–709 (INQAGSRNSE…ILSGLPAPDF (194 aa)).

The protein belongs to the TRIM/RBCC family. In terms of assembly, homodimer or heterodimer with MID1. Interacts with IGBP1. Phosphorylated on serine and threonine residues. As to expression, low level in fetal kidney and lung, and in adult prostate, ovary and small intestine.

The protein localises to the cytoplasm. The protein resides in the cytoskeleton. It carries out the reaction S-ubiquitinyl-[E2 ubiquitin-conjugating enzyme]-L-cysteine + [acceptor protein]-L-lysine = [E2 ubiquitin-conjugating enzyme]-L-cysteine + N(6)-ubiquitinyl-[acceptor protein]-L-lysine.. It functions in the pathway protein modification; protein ubiquitination. In terms of biological role, E3 ubiquitin ligase that plays a role in microtubule stabilization. Mediates the 'Lys-48'-linked polyubiquitination of LRRK2 to drive its localization to microtubules and its proteasomal degradation in neurons. This ubiquitination inhibits LRRK2 kinase activation by RAB29. This chain is Probable E3 ubiquitin-protein ligase MID2 (MID2), found in Homo sapiens (Human).